Here is a 739-residue protein sequence, read N- to C-terminus: Poly(A) polymerase alpha (739 aa).

Residues M1 to Q17 show a composition bias toward low complexity. Positions M1–I22 are disordered. S10 and S24 each carry phosphoserine. ATP contacts are provided by residues F100–S102, T109, D113–D115, D167, K228, Y237, and G246–V247. Residues D113, D115, and D167 each contribute to the Mg(2+) site. Residues K444, K445, K506, and K507 each participate in a glycyl lysine isopeptide (Lys-Gly) (interchain with G-Cter in SUMO) cross-link. Positions R490–K507 match the Nuclear localization signal 1 motif. Residues H508–V643 form a ser/Thr-rich region. Over residues L523–S534 the composition is skewed to low complexity. The interval L523 to P725 is disordered. The span at V535–N557 shows a compositional bias: polar residues. S537 is modified (phosphoserine; by MAPK). S558 is modified (phosphoserine). Over residues A566–N582 the composition is skewed to polar residues. Low complexity-rich tracts occupy residues S583 to S594 and T611 to V622. K635 and K644 each carry N6-acetyllysine. The Nuclear localization signal 2 signature appears at K644 to K659. 2 stretches are compositionally biased toward basic and acidic residues: residues N650–T660 and G676–V686. The tract at residues C671 to R739 is required for interaction with NUDT21. The span at S691 to L715 shows a compositional bias: polar residues. K730 carries the N6-acetyllysine; alternate modification. A Glycyl lysine isopeptide (Lys-Gly) (interchain with G-Cter in SUMO); alternate cross-link involves residue K730. Residue S732 is modified to Phosphoserine. An N6-acetyllysine; alternate modification is found at K734. A Glycyl lysine isopeptide (Lys-Gly) (interchain with G-Cter in SUMO); alternate cross-link involves residue K734.

Belongs to the poly(A) polymerase family. Monomer. Found in a complex with CPSF1, FIP1L1 and PAPOLA. Interacts with AHCYL1 and FIP1L1; the interaction with AHCYL1 seems to increase interaction with FIP1L1. Interacts with NUDT21; the interaction is diminished by acetylation. Interacts with KPNB1; the interaction promotes PAP nuclear import and is inhibited by acetylation of PAP. The cofactor is Mg(2+). Mn(2+) is required as a cofactor. Polysumoylated. Varying sumoylation depending on tissue- and cell-type. Highly sumoylated in bladder and NIH 3T3 cells. Sumoylation is required for nuclear localization and enhances PAP stability. Desumoylated by SENP1. Inhibits polymerase activity. Post-translationally, hyperphosphorylation on multiple CDK2 consensus and non-consensus sites in the C-terminal Ser/Thr-rich region represses PAP activity in late M-phase. Phosphorylation/dephosphorylation may regulate the interaction between PAP and CPSF. In terms of processing, acetylated in the C-terminus. Acetylation decreases interaction with NUDT21 and KPNB1, and inhibits nuclear localization through inhibiting binding to the importin alpha/beta complex. As to expression, expressed in brain, thymus, lung, kidney, bladder, testis and spleen.

The protein localises to the nucleus. It catalyses the reaction RNA(n) + ATP = RNA(n)-3'-adenine ribonucleotide + diphosphate. Polymerase that creates the 3'-poly(A) tail of mRNA's. Also required for the endoribonucleolytic cleavage reaction at some polyadenylation sites. May acquire specificity through interaction with a cleavage and polyadenylation specificity factor (CPSF) at its C-terminus. This chain is Poly(A) polymerase alpha (Papola), found in Mus musculus (Mouse).